We begin with the raw amino-acid sequence, 293 residues long: Phosphatidylserine decarboxylase proenzyme (293 aa).

Catalysis depends on charge relay system; for autoendoproteolytic cleavage activity residues Asp-90, His-147, and Ser-254. Ser-254 (schiff-base intermediate with substrate; via pyruvic acid; for decarboxylase activity) is an active-site residue. Ser-254 carries the pyruvic acid (Ser); by autocatalysis modification.

This sequence belongs to the phosphatidylserine decarboxylase family. PSD-B subfamily. Prokaryotic type I sub-subfamily. As to quaternary structure, heterodimer of a large membrane-associated beta subunit and a small pyruvoyl-containing alpha subunit. Pyruvate serves as cofactor. Post-translationally, is synthesized initially as an inactive proenzyme. Formation of the active enzyme involves a self-maturation process in which the active site pyruvoyl group is generated from an internal serine residue via an autocatalytic post-translational modification. Two non-identical subunits are generated from the proenzyme in this reaction, and the pyruvate is formed at the N-terminus of the alpha chain, which is derived from the carboxyl end of the proenzyme. The autoendoproteolytic cleavage occurs by a canonical serine protease mechanism, in which the side chain hydroxyl group of the serine supplies its oxygen atom to form the C-terminus of the beta chain, while the remainder of the serine residue undergoes an oxidative deamination to produce ammonia and the pyruvoyl prosthetic group on the alpha chain. During this reaction, the Ser that is part of the protease active site of the proenzyme becomes the pyruvoyl prosthetic group, which constitutes an essential element of the active site of the mature decarboxylase.

It localises to the cell membrane. The catalysed reaction is a 1,2-diacyl-sn-glycero-3-phospho-L-serine + H(+) = a 1,2-diacyl-sn-glycero-3-phosphoethanolamine + CO2. It functions in the pathway phospholipid metabolism; phosphatidylethanolamine biosynthesis; phosphatidylethanolamine from CDP-diacylglycerol: step 2/2. In terms of biological role, catalyzes the formation of phosphatidylethanolamine (PtdEtn) from phosphatidylserine (PtdSer). This is Phosphatidylserine decarboxylase proenzyme from Yersinia enterocolitica serotype O:8 / biotype 1B (strain NCTC 13174 / 8081).